A 485-amino-acid chain; its full sequence is Aspartyl/glutamyl-tRNA(Asn/Gln) amidotransferase subunit B (485 aa).

It belongs to the GatB/GatE family. GatB subfamily. In terms of assembly, heterotrimer of A, B and C subunits.

The enzyme catalyses L-glutamyl-tRNA(Gln) + L-glutamine + ATP + H2O = L-glutaminyl-tRNA(Gln) + L-glutamate + ADP + phosphate + H(+). The catalysed reaction is L-aspartyl-tRNA(Asn) + L-glutamine + ATP + H2O = L-asparaginyl-tRNA(Asn) + L-glutamate + ADP + phosphate + 2 H(+). Its function is as follows. Allows the formation of correctly charged Asn-tRNA(Asn) or Gln-tRNA(Gln) through the transamidation of misacylated Asp-tRNA(Asn) or Glu-tRNA(Gln) in organisms which lack either or both of asparaginyl-tRNA or glutaminyl-tRNA synthetases. The reaction takes place in the presence of glutamine and ATP through an activated phospho-Asp-tRNA(Asn) or phospho-Glu-tRNA(Gln). This is Aspartyl/glutamyl-tRNA(Asn/Gln) amidotransferase subunit B from Anaplasma marginale (strain Florida).